A 544-amino-acid chain; its full sequence is Probable protein kinase UbiB (544 aa).

Residues 123 to 505 (EFDEQALASA…GRQKSHNVRS (383 aa)) enclose the Protein kinase domain. ATP-binding positions include 129–137 (LASASIAQV) and K156. Catalysis depends on D291, which acts as the Proton acceptor. Residues 522–540 (LPLWLSCGTLVTVLLVLLL) traverse the membrane as a helical segment.

The protein belongs to the ABC1 family. UbiB subfamily.

The protein localises to the cell inner membrane. It functions in the pathway cofactor biosynthesis; ubiquinone biosynthesis [regulation]. Functionally, is probably a protein kinase regulator of UbiI activity which is involved in aerobic coenzyme Q (ubiquinone) biosynthesis. The polypeptide is Probable protein kinase UbiB (Actinobacillus pleuropneumoniae serotype 5b (strain L20)).